Here is a 130-residue protein sequence, read N- to C-terminus: Small ribosomal subunit protein uS9 (130 aa).

It belongs to the universal ribosomal protein uS9 family.

The sequence is that of Small ribosomal subunit protein uS9 from Bordetella avium (strain 197N).